The chain runs to 229 residues: Somatolactin (229 aa).

The signal sequence occupies residues methionine 1 to serine 21. 3 disulfides stabilise this stretch: cysteine 26–cysteine 36, cysteine 87–cysteine 203, and cysteine 220–cysteine 228. N-linked (GlcNAc...) asparagine glycosylation is present at asparagine 143.

It belongs to the somatotropin/prolactin family. Pituitary gland.

It is found in the secreted. This is Somatolactin from Tetraodon miurus (Congo puffer).